We begin with the raw amino-acid sequence, 258 residues long: Acetylglutamate kinase (258 aa).

Substrate contacts are provided by residues 44 to 45 (GG), Arg66, and Asn158. ATP contacts are provided by residues 181-186 (DVSGIL) and 209-211 (IIT).

Belongs to the acetylglutamate kinase family. ArgB subfamily. Homodimer.

Its subcellular location is the cytoplasm. It catalyses the reaction N-acetyl-L-glutamate + ATP = N-acetyl-L-glutamyl 5-phosphate + ADP. The protein operates within amino-acid biosynthesis; L-arginine biosynthesis; N(2)-acetyl-L-ornithine from L-glutamate: step 2/4. Its function is as follows. Catalyzes the ATP-dependent phosphorylation of N-acetyl-L-glutamate. This chain is Acetylglutamate kinase, found in Shigella flexneri serotype 5b (strain 8401).